We begin with the raw amino-acid sequence, 393 residues long: Sugar efflux transporter B (393 aa).

A run of 12 helical transmembrane segments spans residues 13 to 33, 52 to 72, 84 to 101, 105 to 124, 152 to 172, 174 to 194, 219 to 239, 253 to 273, 283 to 303, 308 to 328, 344 to 364, and 366 to 386; these read FDLT…AGAL, MVGF…QFLA, LIVF…LFAW, YFIL…TANP, VSLA…GFSF, VMYL…WFFL, LLLF…IINM, LAGV…LIAG, LLMC…LLAH, LLGL…IGML, LYTN…GIAA, and IWNY…TMFC.

This sequence belongs to the major facilitator superfamily. Set transporter family.

It localises to the cell inner membrane. Involved in the efflux of sugars. The physiological role may be the detoxification of non-metabolizable sugar analogs. Can transport lactose and glucose. This chain is Sugar efflux transporter B (setB), found in Salmonella typhimurium (strain LT2 / SGSC1412 / ATCC 700720).